Reading from the N-terminus, the 476-residue chain is Adenosylhomocysteinase (476 aa).

Positions 67, 142, and 202 each coordinate substrate. 203–205 (TTT) provides a ligand contact to NAD(+). Positions 232 and 236 each coordinate substrate. NAD(+) is bound by residues Asn-237, 266-271 (GYGDVG), Glu-289, Asn-324, 345-347 (IGH), and Asn-390.

This sequence belongs to the adenosylhomocysteinase family. NAD(+) is required as a cofactor.

The protein localises to the cytoplasm. The enzyme catalyses S-adenosyl-L-homocysteine + H2O = L-homocysteine + adenosine. The protein operates within amino-acid biosynthesis; L-homocysteine biosynthesis; L-homocysteine from S-adenosyl-L-homocysteine: step 1/1. Its function is as follows. May play a key role in the regulation of the intracellular concentration of adenosylhomocysteine. The sequence is that of Adenosylhomocysteinase from Prochlorococcus marinus (strain MIT 9303).